The chain runs to 234 residues: tRNA (guanine-N(1)-)-methyltransferase (234 aa).

S-adenosyl-L-methionine is bound by residues Gly-115 and 135-140 (VGDYIL).

Belongs to the RNA methyltransferase TrmD family. Homodimer.

The protein localises to the cytoplasm. It carries out the reaction guanosine(37) in tRNA + S-adenosyl-L-methionine = N(1)-methylguanosine(37) in tRNA + S-adenosyl-L-homocysteine + H(+). In terms of biological role, specifically methylates guanosine-37 in various tRNAs. The polypeptide is tRNA (guanine-N(1)-)-methyltransferase (Rickettsia typhi (strain ATCC VR-144 / Wilmington)).